The primary structure comprises 1073 residues: Duffy receptor alpha form (1073 aa).

The signal sequence occupies residues 1–21 (MEGKKKRPLFFLLVLLLSHKA). Topologically, residues 22 to 1007 (NNVLFERMNG…YECFTKGSST (986 aa)) are extracellular. N-linked (GlcNAc...) asparagine glycans are attached at residues N134, N179, and N202. Disulfide bonds link C214-C243 and C227-C234. N-linked (GlcNAc...) asparagine glycans are attached at residues N252 and N348. 4 disulfides stabilise this stretch: C297-C374, C412-C429, C424-C504, and C433-C502. The interval 517 to 915 (VKNVGSGVES…LNNRKLNRDQ (399 aa)) is disordered. Positions 528-543 (AASSNPITEAVKSSSG) are enriched in polar residues. Positions 546-561 (KVQEDSAHKSVNKGEG) are enriched in basic and acidic residues. The span at 562-576 (KSSTNEADPGSQSGA) shows a compositional bias: polar residues. Basic and acidic residues-rich tracts occupy residues 675–710 (GEVH…DDRS) and 717–734 (HTDE…KDTE). N-linked (GlcNAc...) asparagine glycosylation is present at N679. Over residues 736-766 (AGGSTLTPEQNVSVASDNGNVPGSGNKQNEG) the composition is skewed to polar residues. 3 N-linked (GlcNAc...) asparagine glycosylation sites follow: N746, N779, and N788. Basic and acidic residues predominate over residues 799 to 810 (GNEKDFQKHDFM). 2 stretches are compositionally biased toward low complexity: residues 821–843 (SDHT…SSDH) and 851–864 (SDQT…SDQT). Positions 867–891 (TEGHHRDNVRNPEIKSSEDMSKGDF) are enriched in basic and acidic residues. Residues 893-909 (RNSNSNELYSHNNLNNR) are compositionally biased toward polar residues. The helical transmembrane segment at 1008 to 1029 (GIVYFATGGAFLIILLLFASWN) threads the bilayer. The Cytoplasmic segment spans residues 1030-1073 (AASNDYEEEATFDEFVEYSDDIHRTPLMPNDIEHMQQFTPLDYS).

As to quaternary structure, interacts (via region II) with human ACKR1 (via N-terminal extracellular domain). Interacts (via region II) with rhesus macaque ACKR1 (via N-terminal extracellular domain).

The protein localises to the cell membrane. The protein resides in the cytoplasmic vesicle. Its subcellular location is the secretory vesicle. It localises to the microneme. In terms of biological role, binds to the human erythrocyte Duffy blood group determinant (ACKR1). Binds to the rhesus macaque erythrocyte Duffy blood group determinant (ACKR1). This Plasmodium knowlesi protein is Duffy receptor alpha form.